A 555-amino-acid polypeptide reads, in one-letter code: Galectin-3-binding protein (555 aa).

The N-terminal stretch at 1-18 (MAPLRLFWIWLLVVGTRG) is a signal peptide. The 101-residue stretch at 24–124 (MRLADGGSAN…HDKDASVICT (101 aa)) folds into the SRCR domain. Cystine bridges form between C49/C113, C62/C123, and C93/C103. N69 carries an N-linked (GlcNAc...) asparagine glycan. N-linked (GlcNAc...) asparagine glycosylation occurs at N125. Residues 153–221 (CDLFITVKVR…LYSRRIDVSL (69 aa)) enclose the BTB domain. Residues 260 to 360 (PLELYAYALA…MPPQDLFSLQ (101 aa)) enclose the BACK domain. 3 N-linked (GlcNAc...) asparagine glycosylation sites follow: N362, N398, and N550.

Homodimers and homomultimers. The multimers form ring-like structures with a diameter of 30-40 nm. Binds LGALS1 and LGALS3. Binds ITGB1, COL4A1, COL5A1, COL6A1, FN1 and NID. Interacts with the gamma-tubulin ring complex (gamma-TuRC), composed of gamma-tubulin, TUBGCP2, TUBGCP3, TUBGCP4, TUBGCP5 and TUBGCP6. The unglycosylated form interacts with PDE4DIP; this interaction, which is PDE4DIP isoform-specific, may connect a pericentrosomal complex, made of AKAP9, CDK5RAP2, EB1/MAPRE1 and PDE4DIP, to the gamma-tubulin ring complex (gamma-TuRC) to promote microtubule assembly and acetylation.

The protein localises to the secreted. It localises to the extracellular space. It is found in the extracellular matrix. Promotes integrin-mediated cell adhesion. May stimulate host defense against viruses and tumor cells. The sequence is that of Galectin-3-binding protein (LGALS3BP) from Bos taurus (Bovine).